The chain runs to 920 residues: MKEQEFSYREAKDVSLDSKGLENSFLSSPNREKTPLFFEGNSNETSGYDQTKNFTHGDGDMSLGNLSELNVATDLLESLDLRSMYMHGYGHLDSSFSSQHSPDNRKRMSSTSVFKRINSEEEGRIPSLTYSAGTMNSTSSSTASLKGADIVADYETFNPDQNLAELSFDRSKSSRKRAVEVAEFSRAKTMSPLEYTVQHPYQSHNELSTNPARARAGSVPNLARIPSDVKPVPPAHLSASSTVGPRILPSLPKDTTEDNPALERVETTASLDMDYKPLEPLAPIQEAPVEDTSEPFSSVPEATLDDSDISTESLRKKVLAKMEAKRISSGSSYASTLRKVYDFSELSLPTNGKDYDELYLQSSRNSEPEISTIINDSLQQENMDEDISATSIPKSQAAYGHGSVTYHEVPRYNLTSASVGYSISSQRGRIKSSSTIDNLSAILSSEDLRHPSMQPVPGTKRTYSNYCENEPNKSSQSLVSSESHNVEGWNYSETGTVGFYDPSAEISASIDELRQSTPVARDSELLSRAHSFDLNRLDLPSQDKSTSYEVPNGTENQSPRPVTSLGFVNETFFEEKPKAPLPLGRFYIHLNSILNISISEVHSPIKIIVNTPTQNMQLPWQAVNGNNRLDHDFAFHVDDNFKVSFMFLDIPIEDKSNGSKGVSATKDVSNGKPAETKSKARKFFDKLFNRRKKRKLNKAAAVENSKAKKSVVIKKVSGTATLNLGNVKDSCFGKAFNVEIPIISRGFLEAIPVKINSIGKRTLGNLTLTCLYIPELSVPEQELPFTLEQATMDLRHVRSNYLYNEGYLYRLEDSSIRRRFVVLRSKQLNFYAEKGGQYLDTFQLSKTVVSIPMVNFSEAVSNLGLVAGILATSVDRRHVQLFADSKKVCQKWLQVMNSRSFALDRGTEKLWLQEYVNFMA.

Residues 1–452 (MKEQEFSYRE…LSSEDLRHPS (452 aa)) are disordered. A phosphoserine mark is found at serine 15 and serine 24. The residue at position 34 (threonine 34) is a Phosphothreonine. 2 positions are modified to phosphoserine: serine 46 and serine 62. Residues 69-81 (LNVATDLLESLDL) carry the Nuclear export sequence (NES) 1 motif. Residue serine 95 is modified to Phosphoserine. The span at 461 to 481 (RTYSNYCENEPNKSSQSLVSS) shows a compositional bias: polar residues. Serine 531 carries the post-translational modification Phosphoserine. Residues 538 to 561 (DLPSQDKSTSYEVPNGTENQSPRP) are disordered. A compositionally biased stretch (polar residues) spans 542 to 561 (QDKSTSYEVPNGTENQSPRP). Residues 551–920 (PNGTENQSPR…WLQEYVNFMA (370 aa)) form a cryptic lipid-binding C2 domain region. Residues 681 to 710 (RKFFDKLFNRRKKRKLNKAAAVENSKAKKS) carry the Nuclear localization sequence (NLS) motif. The Nuclear export sequence (NES) 2 signature appears at 763 to 773 (LGNLTLTCLYI). Residues 802-901 (LYNEGYLYRL…WLQVMNSRSF (100 aa)) form the PH domain.

As to quaternary structure, homodimer. Interacts with blt1 and cdr2. Interacts with gef2. Interacts with plo1 and rng2. Interacts with fhk2 and sep1. Interacts with clp1. Phosphorylated. At the onset of mitosis, becomes hyperphosphorylated, leaves the nucleus, and forms a medial ring. Phosphorylation by plo1 and other kinases may contribute to solubilizing mid1 for export from the nucleus. Phosphorylation by sid2 drives removal from the cortex at the actomyosin contractile ring constriction onset.

It localises to the nucleus. The protein localises to the cytoplasm. Its subcellular location is the cell cortex. The protein resides in the cytoskeleton. In terms of biological role, scaffold protein that anchors the contractile ring (CR) at the cell equator during cytokinesis. At the onset of mitosis, membrane-bound oligomers of mid1 assemble recruitment platforms for cytokinetic ring components at the medial cortex and stabilize the ring position during its compaction. Recruits dephosphorylated myo2, but also rng2, clp1 and cdc15 to nodes and to place cytokinetic nodes around the cell equator the medial cortex to promote the ring assembly in cooperation with F-actin. Necessary to stabilize the mitotic spindle perpendicular to the axis of cell division. Also recruits the cdr2 kinase to the CR. In the nucleus, binds to the promoter regions of M-G1 transcribed genes to negatively regulate their expression. This is Anillin-related medial ring protein mid1 from Schizosaccharomyces pombe (strain 972 / ATCC 24843) (Fission yeast).